The primary structure comprises 336 residues: UDP-N-acetylglucosamine--N-acetylmuramyl-(pentapeptide) pyrophosphoryl-undecaprenol N-acetylglucosamine transferase (336 aa).

Asparagine 102, arginine 144, serine 172, and glutamine 264 together coordinate UDP-N-acetyl-alpha-D-glucosamine.

This sequence belongs to the glycosyltransferase 28 family. MurG subfamily.

The protein localises to the cell membrane. It catalyses the reaction di-trans,octa-cis-undecaprenyl diphospho-N-acetyl-alpha-D-muramoyl-L-alanyl-D-glutamyl-meso-2,6-diaminopimeloyl-D-alanyl-D-alanine + UDP-N-acetyl-alpha-D-glucosamine = di-trans,octa-cis-undecaprenyl diphospho-[N-acetyl-alpha-D-glucosaminyl-(1-&gt;4)]-N-acetyl-alpha-D-muramoyl-L-alanyl-D-glutamyl-meso-2,6-diaminopimeloyl-D-alanyl-D-alanine + UDP + H(+). Its pathway is cell wall biogenesis; peptidoglycan biosynthesis. In terms of biological role, cell wall formation. Catalyzes the transfer of a GlcNAc subunit on undecaprenyl-pyrophosphoryl-MurNAc-pentapeptide (lipid intermediate I) to form undecaprenyl-pyrophosphoryl-MurNAc-(pentapeptide)GlcNAc (lipid intermediate II). The protein is UDP-N-acetylglucosamine--N-acetylmuramyl-(pentapeptide) pyrophosphoryl-undecaprenol N-acetylglucosamine transferase of Rubrobacter xylanophilus (strain DSM 9941 / JCM 11954 / NBRC 16129 / PRD-1).